A 350-amino-acid chain; its full sequence is Protein-arginine kinase (350 aa).

The region spanning Ile21 to Ala253 is the Phosphagen kinase C-terminal domain. Residues Ser24–Arg28, His90, Arg124, Arg175–Met179, and Arg206–Glu211 contribute to the ATP site. The short motif at Arg336 to Ala341 is the RDXXRA motif of the pArg binding pocket involved in allosteric regulation element.

This sequence belongs to the ATP:guanido phosphotransferase family.

The catalysed reaction is L-arginyl-[protein] + ATP = N(omega)-phospho-L-arginyl-[protein] + ADP + H(+). Appears to be allosterically activated by the binding of pArg-containing polypeptides to the pArg-binding pocket localized in the C-terminal domain of McsB. In terms of biological role, catalyzes the specific phosphorylation of arginine residues in proteins. In Moorella thermoacetica (strain ATCC 39073 / JCM 9320), this protein is Protein-arginine kinase.